A 109-amino-acid polypeptide reads, in one-letter code: Phosphoribosyl-ATP pyrophosphatase (109 aa).

It belongs to the PRA-PH family.

It is found in the cytoplasm. The catalysed reaction is 1-(5-phospho-beta-D-ribosyl)-ATP + H2O = 1-(5-phospho-beta-D-ribosyl)-5'-AMP + diphosphate + H(+). It participates in amino-acid biosynthesis; L-histidine biosynthesis; L-histidine from 5-phospho-alpha-D-ribose 1-diphosphate: step 2/9. The protein is Phosphoribosyl-ATP pyrophosphatase of Geobacter metallireducens (strain ATCC 53774 / DSM 7210 / GS-15).